Reading from the N-terminus, the 576-residue chain is Dihydroxy-acid dehydratase (576 aa).

Position 56 (Cys56) interacts with [2Fe-2S] cluster. Asp88 is a Mg(2+) binding site. Cys129 lines the [2Fe-2S] cluster pocket. Asp130 and Lys131 together coordinate Mg(2+). N6-carboxylysine is present on Lys131. Cys201 contacts [2Fe-2S] cluster. Position 453 (Glu453) interacts with Mg(2+). Ser479 (proton acceptor) is an active-site residue.

It belongs to the IlvD/Edd family. Homodimer. The cofactor is [2Fe-2S] cluster. Mg(2+) is required as a cofactor.

The enzyme catalyses (2R)-2,3-dihydroxy-3-methylbutanoate = 3-methyl-2-oxobutanoate + H2O. It carries out the reaction (2R,3R)-2,3-dihydroxy-3-methylpentanoate = (S)-3-methyl-2-oxopentanoate + H2O. The protein operates within amino-acid biosynthesis; L-isoleucine biosynthesis; L-isoleucine from 2-oxobutanoate: step 3/4. Its pathway is amino-acid biosynthesis; L-valine biosynthesis; L-valine from pyruvate: step 3/4. Functions in the biosynthesis of branched-chain amino acids. Catalyzes the dehydration of (2R,3R)-2,3-dihydroxy-3-methylpentanoate (2,3-dihydroxy-3-methylvalerate) into 2-oxo-3-methylpentanoate (2-oxo-3-methylvalerate) and of (2R)-2,3-dihydroxy-3-methylbutanoate (2,3-dihydroxyisovalerate) into 2-oxo-3-methylbutanoate (2-oxoisovalerate), the penultimate precursor to L-isoleucine and L-valine, respectively. This Parvibaculum lavamentivorans (strain DS-1 / DSM 13023 / NCIMB 13966) protein is Dihydroxy-acid dehydratase.